The primary structure comprises 334 residues: Protein-methionine-sulfoxide reductase catalytic subunit MsrP (334 aa).

The segment at residues 1–44 (MKKVSRLTEADVTAESAFFMQRRQVLKALGITTAALSLPTAAHA) is a signal peptide (tat-type signal). Mo-molybdopterin is bound by residues N88, 91 to 92 (YE), C146, T181, N233, R238, and 249 to 251 (GIK).

Belongs to the MsrP family. In terms of assembly, heterodimer of a catalytic subunit (MsrP) and a heme-binding subunit (MsrQ). The cofactor is Mo-molybdopterin. In terms of processing, predicted to be exported by the Tat system. The position of the signal peptide cleavage has not been experimentally proven.

It is found in the periplasm. The enzyme catalyses L-methionyl-[protein] + a quinone + H2O = L-methionyl-(S)-S-oxide-[protein] + a quinol. It carries out the reaction L-methionyl-[protein] + a quinone + H2O = L-methionyl-(R)-S-oxide-[protein] + a quinol. Part of the MsrPQ system that repairs oxidized periplasmic proteins containing methionine sulfoxide residues (Met-O), using respiratory chain electrons. Thus protects these proteins from oxidative-stress damage caused by reactive species of oxygen and chlorine generated by the host defense mechanisms. MsrPQ is essential for the maintenance of envelope integrity under bleach stress, rescuing a wide series of structurally unrelated periplasmic proteins from methionine oxidation. The catalytic subunit MsrP is non-stereospecific, being able to reduce both (R-) and (S-) diastereoisomers of methionine sulfoxide. The sequence is that of Protein-methionine-sulfoxide reductase catalytic subunit MsrP from Cronobacter sakazakii (strain ATCC BAA-894) (Enterobacter sakazakii).